The primary structure comprises 250 residues: Small ribosomal subunit protein uS3 (250 aa).

One can recognise a KH type-2 domain in the interval 39–109 (IRNYVQARLK…EVKIDVVEVI (71 aa)). A compositionally biased stretch (basic and acidic residues) spans 225-239 (INERRGDSKSRPRDP). The tract at residues 225-250 (INERRGDSKSRPRDPRNKRRRRTKRS) is disordered. A compositionally biased stretch (basic residues) spans 240–250 (RNKRRRRTKRS).

This sequence belongs to the universal ribosomal protein uS3 family. Part of the 30S ribosomal subunit. Forms a tight complex with proteins S10 and S14.

Functionally, binds the lower part of the 30S subunit head. Binds mRNA in the 70S ribosome, positioning it for translation. The sequence is that of Small ribosomal subunit protein uS3 from Chlorobium phaeobacteroides (strain DSM 266 / SMG 266 / 2430).